A 170-amino-acid chain; its full sequence is Regulator of ribonuclease activity A (170 aa).

The protein belongs to the RraA family. In terms of assembly, homotrimer. Binds to both RNA-binding sites in the C-terminal region of Rne and to RhlB.

The protein localises to the cytoplasm. Globally modulates RNA abundance by binding to RNase E (Rne) and regulating its endonucleolytic activity. Can modulate Rne action in a substrate-dependent manner by altering the composition of the degradosome. Modulates RNA-binding and helicase activities of the degradosome. This is Regulator of ribonuclease activity A from Psychromonas ingrahamii (strain DSM 17664 / CCUG 51855 / 37).